Consider the following 514-residue polypeptide: Calcium-binding mitochondrial carrier protein SCaMC-2 (514 aa).

Residues 1–234 (MARPRSLVSP…EKQTGMWWRH (234 aa)) lie on the Mitochondrial intermembrane side of the membrane. EF-hand domains lie at 56–91 (EHER…LGVH), 92–122 (RTEL…HYLR), 123–158 (DHEK…LGVN), and 159–194 (ISEQ…HSAE). The Ca(2+) site is built by D69, N71, D73, D80, D105, D107, D109, Q111, and E116. Solcar repeat units follow at residues 229 to 315 (GMWW…IKRI), 323 to 408 (LGIH…LKNA), and 420 to 508 (PGVF…LKLT). Residues 235–252 (LVAGGGAGAVSRTCTAPL) form a helical membrane-spanning segment. The Mitochondrial matrix portion of the chain corresponds to 253–289 (DRLKVLMQVHASRSNNMSILGGFTHMIREGGFRSLWR). Residues 290–309 (GNGINVIKIAPESAIKFMAY) traverse the membrane as a helical segment. Over 310 to 332 (EQIKRIIGSNQETLGIHERFVAG) the chain is Mitochondrial intermembrane. The chain crosses the membrane as a helical span at residues 333-346 (SLAGVIAQSSIYPM). Residues 347–382 (EVLKTRMALRKTGQYQGVLDCGKKILLQEGLSAFYK) are Mitochondrial matrix-facing. Residues 383–402 (GYVPNMLGIIPYAGIDLAVY) form a helical membrane-spanning segment. At 403-425 (ETLKNAWLQRYATSSADPGVFVL) the chain is on the mitochondrial intermembrane side. A helical transmembrane segment spans residues 426–443 (LACGTVSSTCGQLASYPL). The Mitochondrial matrix portion of the chain corresponds to 444–482 (ALVRTRMQAEASVEGAPQMTMSKLFKHIVKTEGAFGLYR). A helical transmembrane segment spans residues 483 to 502 (GLAPNFMKVIPAVSISYVVY). At 503 to 514 (ENLKLTLGVQSR) the chain is on the mitochondrial intermembrane side.

Belongs to the mitochondrial carrier (TC 2.A.29) family.

The protein resides in the mitochondrion inner membrane. In terms of biological role, calcium-dependent mitochondrial solute carrier. The sequence is that of Calcium-binding mitochondrial carrier protein SCaMC-2 (slc25a25) from Xenopus laevis (African clawed frog).